We begin with the raw amino-acid sequence, 459 residues long: MKSRPLHIAMYPWLAMGHQTAFLHLCNKLAIRGHKISFITPPKAQAKLEPFNLHPNSITFVTINVPHVEGLPPDAQTTADVTYPLQPQIMTAMDLTKDDIETLLTGLKPDLVFYDFTHWMPALAKRLGIKAVHYCTASSVMVGYTLTPSRFHQGTDLMESDLMEPPEGYPDSSIKLQTHEARTFAAKRKDTFGSNVLFYDRQFIALNEADLLAYRTCREIEGPYMDYIGKQFNKPVVATGPVILDPPTLDLEEKFSTWLGGFEPGSVVYCCFGSECTLRPNQFLELVLGLELTGMPFLAAVKAPLGFETVESAMPEGFQERVKGRGFVYGGWVQQQLILAHPSVGCFITHCGSGSLSEALVNKCQLVLLPNVGDQILNARMMGTNLEVGVEVEKGDEDGMYTKESVCKAVSIVMDCENETSKRVRANHARIRELLLNKDLESSYVDSFCMRLQEIVEGI.

His18 functions as the Proton acceptor in the catalytic mechanism. His18 provides a ligand contact to an anthocyanidin. Asp115 serves as the catalytic Charge relay. 6 residues coordinate UDP-alpha-D-glucose: Thr136, Val333, Gln335, His350, Ser355, and Glu358. Position 373 (Gly373) interacts with an anthocyanidin. Positions 374 and 375 each coordinate UDP-alpha-D-glucose.

The protein belongs to the UDP-glycosyltransferase family. As to expression, expressed in leaves.

The enzyme catalyses a flavonol 3-O-beta-D-glucoside + UDP-alpha-D-glucose = a flavonol 3-O-beta-D-glucosyl-(1-&gt;2)-beta-D-glucoside + UDP + H(+). Functionally, flavonol 3-O-glucoside/galactoside (1-&gt;2) glucosyltransferase converting kaempferol 3-O-glucoside to kaempferol 3-O-sophoroside. Has a broad in vitro activity for kaempferol/ quercetin 3-O-glucoside/galactoside derivatives, but cannot glucosylate kaempferol 3-O-rhamnosyl-(1-&gt;4)-[rhamnosyl-(1-&gt;6)- glucoside] and 3-O-rhamnosyl-(1-&gt;4)-[glucosyl-(1-&gt;6)-glucoside]. Has a higher preference for UDP-glucose than UDP-galactose, and no activity with UDP-arabinose and UDP-glucuronic acid. Represents probably a recessive allele of the gene. This chain is UDP-glycosyltransferase 79B30, found in Glycine max (Soybean).